Consider the following 232-residue polypeptide: Phosphatidylserine decarboxylase proenzyme (232 aa).

The Schiff-base intermediate with substrate; via pyruvic acid role is filled by Ser-190. Ser-190 is subject to Pyruvic acid (Ser); by autocatalysis.

This sequence belongs to the phosphatidylserine decarboxylase family. PSD-A subfamily. In terms of assembly, heterodimer of a large membrane-associated beta subunit and a small pyruvoyl-containing alpha subunit. The cofactor is pyruvate. Post-translationally, is synthesized initially as an inactive proenzyme. Formation of the active enzyme involves a self-maturation process in which the active site pyruvoyl group is generated from an internal serine residue via an autocatalytic post-translational modification. Two non-identical subunits are generated from the proenzyme in this reaction, and the pyruvate is formed at the N-terminus of the alpha chain, which is derived from the carboxyl end of the proenzyme. The post-translation cleavage follows an unusual pathway, termed non-hydrolytic serinolysis, in which the side chain hydroxyl group of the serine supplies its oxygen atom to form the C-terminus of the beta chain, while the remainder of the serine residue undergoes an oxidative deamination to produce ammonia and the pyruvoyl prosthetic group on the alpha chain.

It is found in the cell membrane. It carries out the reaction a 1,2-diacyl-sn-glycero-3-phospho-L-serine + H(+) = a 1,2-diacyl-sn-glycero-3-phosphoethanolamine + CO2. The protein operates within phospholipid metabolism; phosphatidylethanolamine biosynthesis; phosphatidylethanolamine from CDP-diacylglycerol: step 2/2. Functionally, catalyzes the formation of phosphatidylethanolamine (PtdEtn) from phosphatidylserine (PtdSer). Important for establishment of root nodule symbiosis with the host plant. This is Phosphatidylserine decarboxylase proenzyme from Rhizobium meliloti (strain 1021) (Ensifer meliloti).